The primary structure comprises 351 residues: Phosphoribosylformylglycinamidine cyclo-ligase (351 aa).

The protein belongs to the AIR synthase family.

It is found in the cytoplasm. It carries out the reaction 2-formamido-N(1)-(5-O-phospho-beta-D-ribosyl)acetamidine + ATP = 5-amino-1-(5-phospho-beta-D-ribosyl)imidazole + ADP + phosphate + H(+). It participates in purine metabolism; IMP biosynthesis via de novo pathway; 5-amino-1-(5-phospho-D-ribosyl)imidazole from N(2)-formyl-N(1)-(5-phospho-D-ribosyl)glycinamide: step 2/2. The protein is Phosphoribosylformylglycinamidine cyclo-ligase of Burkholderia pseudomallei (strain 1710b).